We begin with the raw amino-acid sequence, 223 residues long: Membrane-associated progesterone receptor component 2 (223 aa).

The tract at residues 1–33 (MAAGDGDVKLGTLGSGSESSNDGGSESPGDAGA) is disordered. An O-linked (Xyl...) (chondroitin sulfate) serine glycan is attached at S15. Residues 15–33 (SGSESSNDGGSESPGDAGA) show a composition bias toward low complexity. A helical transmembrane segment spans residues 42–66 (AAALALLTGGGEMLLNVALVALVLL). S90, S104, and S208 each carry phosphoserine. One can recognise a Cytochrome b5 heme-binding domain in the interval 102 to 201 (DFSLEQLRQY…EKYDYVGRLL (100 aa)). Positions 202-223 (KPGEEPSEYTDEEDTKDHNKQD) are disordered. Residues 206–215 (EPSEYTDEED) show a composition bias toward acidic residues. The residue at position 210 (Y210) is a Phosphotyrosine. T211 carries the phosphothreonine modification.

This sequence belongs to the cytochrome b5 family. MAPR subfamily. Interacts with PGRMC1. Interacts with AAAS. As to expression, expressed by endometrial glands and stroma (at protein level). Detected in urine (at protein level).

It is found in the membrane. It localises to the nucleus envelope. Its subcellular location is the endoplasmic reticulum. The protein localises to the secreted. In terms of biological role, required for the maintenance of uterine histoarchitecture and normal female reproductive lifespan. May serve as a universal non-classical progesterone receptor in the uterus. Intracellular heme chaperone required for delivery of labile, or signaling heme, to the nucleus. Plays a role in adipocyte function and systemic glucose homeostasis. In brown fat, which has a high demand for heme, delivery of labile heme in the nucleus regulates the activity of heme-responsive transcriptional repressors such as NR1D1 and BACH1. The protein is Membrane-associated progesterone receptor component 2 of Homo sapiens (Human).